A 395-amino-acid chain; its full sequence is Non-structural protein 1 (395 aa).

The DRBM domain occupies 328–395 (NYIQLLNEHS…AEQMFRHQCF (68 aa)).

The protein is Non-structural protein 1 of Homo sapiens (Human).